The chain runs to 269 residues: Tryptophan synthase alpha chain (269 aa).

Active-site proton acceptor residues include glutamate 49 and aspartate 60.

The protein belongs to the TrpA family. Tetramer of two alpha and two beta chains.

It catalyses the reaction (1S,2R)-1-C-(indol-3-yl)glycerol 3-phosphate + L-serine = D-glyceraldehyde 3-phosphate + L-tryptophan + H2O. The protein operates within amino-acid biosynthesis; L-tryptophan biosynthesis; L-tryptophan from chorismate: step 5/5. The alpha subunit is responsible for the aldol cleavage of indoleglycerol phosphate to indole and glyceraldehyde 3-phosphate. The chain is Tryptophan synthase alpha chain from Stutzerimonas stutzeri (strain A1501) (Pseudomonas stutzeri).